The primary structure comprises 245 residues: MTFTASSSSCAITESPVVVALDYHERDKALAFVDKIDPRDCRLKVGKEMFTLFGPQLVRDLQQRGFDVFLDLKFHDIPNTTARAVAAAADLGVWMVNVHASGGARMMAAARDALAPFGKDAPLLIAVTVLTSMETSDLRDLGVTLSPAEHAERLVRLTQQCGLDGVVCSAQEAVRFKQVFGAAFKLVTPGIRPAGSEAGDQRRIMTPEQALSAGVDYMVIGRPVTQSVDPAQTLKDINASLKREA.

Residues Asp-22, Lys-44, 71 to 80, Thr-131, Arg-192, Gln-201, Gly-221, and Arg-222 each bind substrate; that span reads DLKFHDIPNT. The active-site Proton donor is the Lys-73.

It belongs to the OMP decarboxylase family. Type 1 subfamily. As to quaternary structure, homodimer.

It carries out the reaction orotidine 5'-phosphate + H(+) = UMP + CO2. The protein operates within pyrimidine metabolism; UMP biosynthesis via de novo pathway; UMP from orotate: step 2/2. Catalyzes the decarboxylation of orotidine 5'-monophosphate (OMP) to uridine 5'-monophosphate (UMP). The sequence is that of Orotidine 5'-phosphate decarboxylase from Salmonella choleraesuis (strain SC-B67).